The following is a 1032-amino-acid chain: Probable ATP-dependent RNA helicase DDX46 (1032 aa).

A compositionally biased stretch (basic residues) spans 1 to 24 (MGRESRHYRKRSASRGRSGSRSRS). The interval 1-227 (MGRESRHYRK…TEMEDEELDP (227 aa)) is disordered. The N-myristoyl glycine moiety is linked to residue G2. Residues 26 to 49 (SPSDKRSKRGDDRRSRSRDRDRRR) show a composition bias toward basic and acidic residues. Composition is skewed to basic residues over residues 50-73 (ERSR…RSRS) and 81-103 (ERRR…RRSR). The segment covering 112 to 200 (KKTENRSRSK…EMKQGKKWSL (89 aa)) has biased composition (basic and acidic residues). Positions 152 to 197 (DQNKLEEEMRKRKERVEKWREEQRKKAMENIGELKKEIEEMKQGKK) form a coiled coil. K186 is covalently cross-linked (Glycyl lysine isopeptide (Lys-Gly) (interchain with G-Cter in SUMO2)). At S199 the chain carries Phosphoserine. Residues 201-211 (EDDDDDEDDPA) show a composition bias toward acidic residues. An N6-acetyllysine modification is found at K263. Phosphotyrosine is present on Y294. A phosphoserine mark is found at S295 and S296. Residue K325 forms a Glycyl lysine isopeptide (Lys-Gly) (interchain with G-Cter in SUMO2) linkage. Phosphoserine is present on S346. The short motif at 372–400 (KSWVQCGISMKILNSLKKHGYEKPTPIQT) is the Q motif element. Positions 403–581 (IPAIMSGRDL…RRILSKPIEV (179 aa)) constitute a Helicase ATP-binding domain. 416–423 (AKTGSGKT) provides a ligand contact to ATP. The DEAD box signature appears at 529 to 532 (DEAD). In terms of domain architecture, Helicase C-terminal spans 592 to 753 (DVEQQVIVIE…AVPPDLEKLW (162 aa)). Residue K776 is modified to N6-acetyllysine. Residue K779 forms a Glycyl lysine isopeptide (Lys-Gly) (interchain with G-Cter in SUMO2) linkage. A Phosphoserine modification is found at S804. Residue K904 is modified to N6-acetyllysine. Glycyl lysine isopeptide (Lys-Gly) (interchain with G-Cter in SUMO2) cross-links involve residues K908 and K916. Position 929 is a phosphoserine (S929).

It belongs to the DEAD box helicase family. DDX46/PRP5 subfamily. As to quaternary structure, component of the 17S U2 SnRNP complex, a ribonucleoprotein complex that contains small nuclear RNA (snRNA) U2 and a number of specific proteins. Within the 17S U2 SnRNP complex, DDX46 is part of the SF3B subcomplex, which is required for 'A' complex assembly formed by the stable binding of U2 snRNP to the branchpoint sequence in pre-mRNA. Recruited to the 17S U2 SnRNP complex following release of DDX42; DDX42 and DDX46 bind the SF3B subcomplex in a competitive manner.

It is found in the nucleus speckle. The protein resides in the nucleus. It localises to the cajal body. It catalyses the reaction ATP + H2O = ADP + phosphate + H(+). Component of the 17S U2 SnRNP complex of the spliceosome, a large ribonucleoprotein complex that removes introns from transcribed pre-mRNAs. The 17S U2 SnRNP complex (1) directly participates in early spliceosome assembly and (2) mediates recognition of the intron branch site during pre-mRNA splicing by promoting the selection of the pre-mRNA branch-site adenosine, the nucleophile for the first step of splicing. Within the 17S U2 SnRNP complex, DDX46 plays essential roles during assembly of pre-spliceosome and proofreading of the branch site. This is Probable ATP-dependent RNA helicase DDX46 (Ddx46) from Mus musculus (Mouse).